We begin with the raw amino-acid sequence, 226 residues long: UPF0319 protein YpAngola_A3206 (226 aa).

A signal peptide spans 1–20; it reads MKLGLVAGMLAVCFSFSSVA.

Belongs to the UPF0319 family.

This chain is UPF0319 protein YpAngola_A3206, found in Yersinia pestis bv. Antiqua (strain Angola).